Consider the following 397-residue polypeptide: Dual oxidase maturation factor 1 (397 aa).

2 helical membrane passes run 26 to 46 and 57 to 77; these read FVIF…LPGV and YVLM…PCWA. Asparagine 109 is a glycosylation site (N-linked (GlcNAc...) asparagine). Helical transmembrane passes span 191–211, 218–238, and 261–281; these read AAIW…LFLP, ILAT…LSPC, and CFYL…GLGI. A disordered region spans residues 324 to 376; sequence YGTNTTNSSRDKNDISSDKTAGSSGFQSRTSTCQSSASSASLRSQSSIETVHD. N-linked (GlcNAc...) asparagine glycans are attached at residues asparagine 327 and asparagine 330. Polar residues predominate over residues 341-350; it reads DKTAGSSGFQ. Low complexity predominate over residues 351 to 370; sequence SRTSTCQSSASSASLRSQSS.

The protein belongs to the DUOXA family. In terms of assembly, interacts with bli-3 and tsp-15. Interacts with csnk-1. As to expression, expressed in the hypodermis, specifically in seam cells, the terminal bulb of the pharynx, the distal region of the gonadal arm, vulva, spermatheca and uterus.

It localises to the membrane. Its function is as follows. Plays a role in cuticle biogenesis. In complex with tsp-15 and the dual oxidase bli-3, promotes the generation of reactive oxygen species (ROS) and tyrosine cross-linking of collagen, thus stabilizing cuticular extracellular matrix. This is Dual oxidase maturation factor 1 from Caenorhabditis elegans.